The primary structure comprises 1241 residues: High-affinity potassium transport protein (1241 aa).

Transmembrane regions (helical) follow at residues 49-70 (NFIAVHYFYTIVLTLITSILLY) and 78-98 (IDALFLAAGAVTQGGLNTVDV). The N-linked (GlcNAc...) asparagine glycan is linked to Asn100. The chain crosses the membrane as a helical span at residues 107–127 (IILYIICCISTPIAVHSCLAF). 3 disordered regions span residues 162–241 (TART…SLDD), 253–316 (KYHG…TPED), and 329–570 (EGTA…QLQQ). A compositionally biased stretch (polar residues) spans 164–177 (RTMTKSKTGGTQRV). Composition is skewed to basic and acidic residues over residues 181-191 (GKSDKRDDFQE) and 199-214 (VNRDEQDSVHSSHNSR). A compositionally biased stretch (low complexity) spans 215–238 (DSNSNANTNSSNNNSINHNGSSGS). N-linked (GlcNAc...) asparagine glycosylation is found at Asn223, Asn227, Asn233, Asn257, Asn274, Asn353, and Asn364. Composition is skewed to polar residues over residues 268-280 (NTATDENISQKLK) and 345-365 (TDGTRNMDNGSESKSAPTMNE). The segment covering 366 to 375 (SKIRIQDKGA) has biased composition (basic and acidic residues). The segment covering 380 to 411 (DQDSVLHSSNSSACTSDEDSLPTNFGGTTPSL) has biased composition (polar residues). 2 N-linked (GlcNAc...) asparagine glycosylation sites follow: Asn389 and Asn442. 2 stretches are compositionally biased toward basic residues: residues 446-455 (PPRKASKSKR) and 482-497 (HLPKARRIRQQIKRRL). Residues 498–509 (STGSIDKNSSSD) show a composition bias toward polar residues. Residues Asn505 and Asn538 are each glycosylated (N-linked (GlcNAc...) asparagine). Residues 520–545 (NDDDDGNEGDNMEEYFADNESGDEDD) show a composition bias toward acidic residues. The span at 561–570 (KQQQQHQLQQ) shows a compositional bias: low complexity. Residues Asn584, Asn660, Asn681, Asn691, and Asn741 are each glycosylated (N-linked (GlcNAc...) asparagine). The segment at 677 to 714 (NSHRNGSEDVSSDSNETTYPLNGNNDHSQNDANGYPTY) is disordered. Polar residues predominate over residues 684–708 (EDVSSDSNETTYPLNGNNDHSQNDA). The next 5 helical transmembrane spans lie at 784-806 (ILVVYYVGWHIVSFVMLVPWINL), 819-840 (VSPTWWGFWTAMSAFNDLGLTL), 844-864 (SMMSFDKAVYPLIVMIWFIII), 868-888 (GFPILLRCIIWIMFKLSPDLS), and 904-924 (CFTLLFPKAATWWLLLTLVGL). N-linked (GlcNAc...) asparagine glycosylation occurs at Asn925. 2 helical membrane passes run 929–949 (WILFIILDFGSTVVKSLSKGY) and 977–997 (SIQVSYMLMMYVSVLPLAISI). Positions 1011-1073 (YGEMGGKPED…ENENPNEEST (63 aa)) are disordered. Acidic residues predominate over residues 1021–1041 (TDTEEDGDCDDEDDDNEEEES). Over residues 1050-1062 (GKSKKETKKKKKR) the composition is skewed to basic residues. 2 helical membrane-spanning segments follow: residues 1084-1104 (QLSFDLWFLFLGLFIICICER) and 1117-1137 (VFTILFEIVSAYGTVGLSLGY). N-linked (GlcNAc...) asparagine glycosylation occurs at Asn1141. The interval 1222 to 1241 (DELKHKRSLSRSSKRSTKTN) is disordered. Positions 1226–1241 (HKRSLSRSSKRSTKTN) are enriched in basic residues.

This sequence belongs to the TrkH potassium transport family.

The protein localises to the membrane. Its function is as follows. This protein is required for high-affinity potassium transport. The polypeptide is High-affinity potassium transport protein (TRK1) (Saccharomyces uvarum (Yeast)).